Here is a 149-residue protein sequence, read N- to C-terminus: Oligosaccharyltransferase complex subunit ostc-B (149 aa).

The Cytoplasmic portion of the chain corresponds to 1-32 (MESLYRIPFTVLECPNLKLKKPSWLHMPSAMT). A helical membrane pass occupies residues 33 to 53 (VYAMVVVSYFLITGGIIYDVI). At 54–83 (VEPPSVGSMTDEHGHQRPVAFLAYRVNGQY) the chain is on the extracellular side. Residues 84–104 (IMEGLASSFLFTMGGLGFIIL) form a helical membrane-spanning segment. The Cytoplasmic portion of the chain corresponds to 105–117 (DRSNAPNIPKLNR). Residues 118-138 (FLLLFIGFVCVLLSFFMARVF) traverse the membrane as a helical segment. Topologically, residues 139–149 (MRMKLPGYLMG) are extracellular.

Belongs to the OSTC family. As to quaternary structure, specific component of the STT3A-containing form of the oligosaccharyltransferase (OST) complex.

Its subcellular location is the membrane. It participates in protein modification; protein glycosylation. In terms of biological role, specific component of the STT3A-containing form of the oligosaccharyl transferase (OST) complex that catalyzes the initial transfer of a defined glycan (Glc(3)Man(9)GlcNAc(2) in eukaryotes) from the lipid carrier dolichol-pyrophosphate to an asparagine residue within an Asn-X-Ser/Thr consensus motif in nascent polypeptide chains, the first step in protein N-glycosylation. N-glycosylation occurs cotranslationally and the complex associates with the Sec61 complex at the channel-forming translocon complex that mediates protein translocation across the endoplasmic reticulum (ER). All subunits are required for a maximal enzyme activity. The sequence is that of Oligosaccharyltransferase complex subunit ostc-B from Xenopus laevis (African clawed frog).